The sequence spans 486 residues: N-succinylglutamate 5-semialdehyde dehydrogenase (486 aa).

220–225 (GSSRTG) contacts NAD(+). Residues Glu243 and Cys277 contribute to the active site.

This sequence belongs to the aldehyde dehydrogenase family. AstD subfamily.

The catalysed reaction is N-succinyl-L-glutamate 5-semialdehyde + NAD(+) + H2O = N-succinyl-L-glutamate + NADH + 2 H(+). It participates in amino-acid degradation; L-arginine degradation via AST pathway; L-glutamate and succinate from L-arginine: step 4/5. In terms of biological role, catalyzes the NAD-dependent reduction of succinylglutamate semialdehyde into succinylglutamate. In Shewanella sediminis (strain HAW-EB3), this protein is N-succinylglutamate 5-semialdehyde dehydrogenase.